A 135-amino-acid chain; its full sequence is L-alanine exporter AlaE (135 aa).

3 helical membrane passes run 9-29 (VATV…IAGM), 75-95 (DILA…LIAG), and 96-116 (ASFA…ILLA).

Belongs to the AlaE exporter family.

The protein resides in the cell inner membrane. Its function is as follows. Exports L-alanine. This Cereibacter sphaeroides (strain ATCC 17023 / DSM 158 / JCM 6121 / CCUG 31486 / LMG 2827 / NBRC 12203 / NCIMB 8253 / ATH 2.4.1.) (Rhodobacter sphaeroides) protein is L-alanine exporter AlaE.